The primary structure comprises 527 residues: Bifunctional purine biosynthesis protein PurH (527 aa).

The 149-residue stretch at 1–149 (MASDFLPVRR…KNFARVAVAT (149 aa)) folds into the MGS-like domain.

It belongs to the PurH family.

It catalyses the reaction (6R)-10-formyltetrahydrofolate + 5-amino-1-(5-phospho-beta-D-ribosyl)imidazole-4-carboxamide = 5-formamido-1-(5-phospho-D-ribosyl)imidazole-4-carboxamide + (6S)-5,6,7,8-tetrahydrofolate. It carries out the reaction IMP + H2O = 5-formamido-1-(5-phospho-D-ribosyl)imidazole-4-carboxamide. It functions in the pathway purine metabolism; IMP biosynthesis via de novo pathway; 5-formamido-1-(5-phospho-D-ribosyl)imidazole-4-carboxamide from 5-amino-1-(5-phospho-D-ribosyl)imidazole-4-carboxamide (10-formyl THF route): step 1/1. Its pathway is purine metabolism; IMP biosynthesis via de novo pathway; IMP from 5-formamido-1-(5-phospho-D-ribosyl)imidazole-4-carboxamide: step 1/1. This Xanthomonas euvesicatoria pv. vesicatoria (strain 85-10) (Xanthomonas campestris pv. vesicatoria) protein is Bifunctional purine biosynthesis protein PurH.